Reading from the N-terminus, the 381-residue chain is Beta-lactamase CMY-4 (381 aa).

Positions 1 to 20 (MMKKSLCCALLLTASFSTFA) are cleaved as a signal peptide. Ser-84 functions as the Acyl-ester intermediate in the catalytic mechanism. The a beta-lactam site is built by Ser-84, Gln-140, Tyr-170, and Asn-172.

This sequence belongs to the class-C beta-lactamase family.

It catalyses the reaction a beta-lactam + H2O = a substituted beta-amino acid. Functionally, class C beta-lactamase which confers resistance to penicillins and cephalosporins. In Klebsiella pneumoniae, this protein is Beta-lactamase CMY-4.